The chain runs to 506 residues: ATP synthase subunit alpha (506 aa).

An ATP-binding site is contributed by 169 to 176 (GDRQTGKT).

Belongs to the ATPase alpha/beta chains family. As to quaternary structure, F-type ATPases have 2 components, CF(1) - the catalytic core - and CF(0) - the membrane proton channel. CF(1) has five subunits: alpha(3), beta(3), gamma(1), delta(1), epsilon(1). CF(0) has three main subunits: a(1), b(2) and c(9-12). The alpha and beta chains form an alternating ring which encloses part of the gamma chain. CF(1) is attached to CF(0) by a central stalk formed by the gamma and epsilon chains, while a peripheral stalk is formed by the delta and b chains.

It localises to the cell membrane. The enzyme catalyses ATP + H2O + 4 H(+)(in) = ADP + phosphate + 5 H(+)(out). In terms of biological role, produces ATP from ADP in the presence of a proton gradient across the membrane. The alpha chain is a regulatory subunit. This is ATP synthase subunit alpha from Lawsonia intracellularis (strain PHE/MN1-00).